We begin with the raw amino-acid sequence, 436 residues long: Alpha-2 adrenergic receptor (436 aa).

Over 1 to 27 the chain is Extracellular; it reads MDVTQSNATKDDANITVTPWPYTETAA. Asn-7 and Asn-14 each carry an N-linked (GlcNAc...) asparagine glycan. Residues 28–52 form a helical membrane-spanning segment; that stretch reads AFIILVVSVIILVSIVGNVLVIVAV. Topologically, residues 53-64 are cytoplasmic; that stretch reads LTSRALRAPQNL. The helical transmembrane segment at 65-90 threads the bilayer; it reads FLVSLACADILVATLVIPFSLANEIM. The Extracellular portion of the chain corresponds to 91–100; sequence GYWFFGSTWC. Cys-100 and Cys-173 are joined by a disulfide. Residues 101 to 123 form a helical membrane-spanning segment; that stretch reads AFYLALDVLFCTSSIVHLCAISL. Residues 124–144 are Cytoplasmic-facing; that stretch reads DRYWSVTKAVSYNLKRTPKRI. A helical membrane pass occupies residues 145–167; the sequence is KSMIAVVWVISAVISFPPLIMTK. Residues 168-178 lie on the Extracellular side of the membrane; that stretch reads HDEKECLINDE. The chain crosses the membrane as a helical span at residues 179–202; that stretch reads TWYILSSSLVSFFAPGFIMITVYC. At 203-329 the chain is on the cytoplasmic side; that stretch reads KIYRVAKQRS…QMREKRFTFV (127 aa). The segment at 238 to 280 is disordered; sequence KFEKESPSSNSSESNQRQEELDDIDLEESATSDNKPKSSRFSN. Residues 257 to 267 show a composition bias toward acidic residues; the sequence is ELDDIDLEESA. Residues 330 to 353 form a helical membrane-spanning segment; it reads LTVVMGVFVLCWFPFFFTYSLHAI. The Extracellular segment spans residues 354 to 366; the sequence is CGDSCEPPEALFK. The chain crosses the membrane as a helical span at residues 367–387; it reads LFFWIGYCNSSVNPIIYTIFN. Residues 388–436 are Cytoplasmic-facing; it reads RDFRKAFKKICLLDCAAHLRDSCLGTLGRLNAKCIFECHQKSNQEETAN.

Belongs to the G-protein coupled receptor 1 family.

Its subcellular location is the cell membrane. In terms of biological role, alpha-2 adrenergic receptors mediate the catecholamine-induced inhibition of adenylate cyclase through the action of G proteins. The polypeptide is Alpha-2 adrenergic receptor (Carassius auratus (Goldfish)).